Consider the following 83-residue polypeptide: Putative membrane protein insertion efficiency factor (83 aa).

It belongs to the UPF0161 family.

The protein resides in the cell inner membrane. Its function is as follows. Could be involved in insertion of integral membrane proteins into the membrane. This chain is Putative membrane protein insertion efficiency factor, found in Pelagibacter ubique (strain HTCC1062).